A 1218-amino-acid polypeptide reads, in one-letter code: Mgp-operon protein 3 (1218 aa).

An N-terminal signal peptide occupies residues 1–25; it reads MKSKLKLKRYLLFLPLLPLGTLSLA. Disordered stretches follow at residues 109 to 129, 213 to 245, 262 to 353, and 411 to 440; these read QESQKALNGSQSGSSDTSGSN, HFGSGQESSWNSQRSQKGLKNNPGPKAVTGFKL, EPLD…AVVS, and QDATSTNLPHAAGASQTGLGTGSPREPALT. Residues 116–129 show a composition bias toward low complexity; it reads NGSQSGSSDTSGSN. Positions 217–231 are enriched in polar residues; it reads GQESSWNSQRSQKGL. A compositionally biased stretch (basic and acidic residues) spans 265-286; it reads DSTKEGKGKDESSWKNSEKTTA. Residues 301–342 show a composition bias toward low complexity; that stretch reads AGSASSLQGNGSNSSGLKSLLRSAPVSVPPSSTSNQTLSLSN. The segment covering 411–428 has biased composition (polar residues); it reads QDATSTNLPHAAGASQTG. A helical transmembrane segment spans residues 1121–1141; it reads VGSSVGILLILLILGLGIGIP. The segment covering 1192-1204 has biased composition (low complexity); that stretch reads NNAAPKAPVKPAA. The tract at residues 1192 to 1218 is disordered; that stretch reads NNAAPKAPVKPAAPTAPRPPVQPPKKA. Residues 1205 to 1218 show a composition bias toward pro residues; that stretch reads PTAPRPPVQPPKKA.

The protein resides in the cell membrane. This Mycoplasma pneumoniae (strain ATCC 29342 / M129 / Subtype 1) (Mycoplasmoides pneumoniae) protein is Mgp-operon protein 3.